We begin with the raw amino-acid sequence, 321 residues long: 4-hydroxy-3-methylbut-2-enyl diphosphate reductase (321 aa).

[4Fe-4S] cluster is bound at residue Cys-12. 2 residues coordinate (2E)-4-hydroxy-3-methylbut-2-enyl diphosphate: His-41 and His-74. Residues His-41 and His-74 each contribute to the dimethylallyl diphosphate site. Isopentenyl diphosphate contacts are provided by His-41 and His-74. Cys-96 contributes to the [4Fe-4S] cluster binding site. Residue His-124 coordinates (2E)-4-hydroxy-3-methylbut-2-enyl diphosphate. His-124 is a binding site for dimethylallyl diphosphate. His-124 is an isopentenyl diphosphate binding site. Catalysis depends on Glu-126, which acts as the Proton donor. Residue Thr-167 coordinates (2E)-4-hydroxy-3-methylbut-2-enyl diphosphate. Cys-197 serves as a coordination point for [4Fe-4S] cluster. The (2E)-4-hydroxy-3-methylbut-2-enyl diphosphate site is built by Ser-225, Ser-226, Asn-227, and Ser-269. Dimethylallyl diphosphate-binding residues include Ser-225, Ser-226, Asn-227, and Ser-269. Isopentenyl diphosphate-binding residues include Ser-225, Ser-226, Asn-227, and Ser-269.

The protein belongs to the IspH family. In terms of assembly, homodimer. The cofactor is [4Fe-4S] cluster.

It carries out the reaction isopentenyl diphosphate + 2 oxidized [2Fe-2S]-[ferredoxin] + H2O = (2E)-4-hydroxy-3-methylbut-2-enyl diphosphate + 2 reduced [2Fe-2S]-[ferredoxin] + 2 H(+). The enzyme catalyses dimethylallyl diphosphate + 2 oxidized [2Fe-2S]-[ferredoxin] + H2O = (2E)-4-hydroxy-3-methylbut-2-enyl diphosphate + 2 reduced [2Fe-2S]-[ferredoxin] + 2 H(+). Its pathway is isoprenoid biosynthesis; dimethylallyl diphosphate biosynthesis; dimethylallyl diphosphate from (2E)-4-hydroxy-3-methylbutenyl diphosphate: step 1/1. It participates in isoprenoid biosynthesis; isopentenyl diphosphate biosynthesis via DXP pathway; isopentenyl diphosphate from 1-deoxy-D-xylulose 5-phosphate: step 6/6. Functionally, catalyzes the conversion of 1-hydroxy-2-methyl-2-(E)-butenyl 4-diphosphate (HMBPP) into a mixture of isopentenyl diphosphate (IPP) and dimethylallyl diphosphate (DMAPP). Acts in the terminal step of the DOXP/MEP pathway for isoprenoid precursor biosynthesis. The protein is 4-hydroxy-3-methylbut-2-enyl diphosphate reductase of Escherichia coli O6:K15:H31 (strain 536 / UPEC).